The sequence spans 291 residues: Venom metalloproteinase inhibitor DM43 (291 aa).

2 Ig-like V-type domains span residues 22 to 79 (TNVT…ILTS) and 114 to 171 (GLET…PASA). Asn23 carries an N-linked (GlcNAc...) asparagine glycan. 2 disulfide bridges follow: Cys28-Cys74 and Cys121-Cys163. N-linked (GlcNAc...) asparagine glycosylation is found at Asn156, Asn160, and Asn175. The Ig-like V-type 3 domain occupies 191–288 (PKANFYILND…DSNVLELDLS (98 aa)). Cys213 and Cys265 are oxidised to a cystine.

Homodimer. In terms of processing, N-glycosylated. As to expression, blood and milk.

Metalloproteinase inhibitor. In Didelphis marsupialis (Southern opossum), this protein is Venom metalloproteinase inhibitor DM43.